Consider the following 344-residue polypeptide: Dihydroorotase (344 aa).

Residues histidine 13 and histidine 15 each coordinate Zn(2+). Residues histidine 15–arginine 17 and asparagine 41 contribute to the substrate site. The Zn(2+) site is built by lysine 99, histidine 136, and histidine 174. Lysine 99 carries the N6-carboxylysine modification. A substrate-binding site is contributed by histidine 136. A substrate-binding site is contributed by leucine 219. Aspartate 247 contacts Zn(2+). Aspartate 247 is a catalytic residue. Residues histidine 251 and alanine 263 each contribute to the substrate site.

It belongs to the metallo-dependent hydrolases superfamily. DHOase family. Class II DHOase subfamily. In terms of assembly, homodimer. Zn(2+) is required as a cofactor.

It carries out the reaction (S)-dihydroorotate + H2O = N-carbamoyl-L-aspartate + H(+). It participates in pyrimidine metabolism; UMP biosynthesis via de novo pathway; (S)-dihydroorotate from bicarbonate: step 3/3. In terms of biological role, catalyzes the reversible cyclization of carbamoyl aspartate to dihydroorotate. The protein is Dihydroorotase of Aromatoleum aromaticum (strain DSM 19018 / LMG 30748 / EbN1) (Azoarcus sp. (strain EbN1)).